Reading from the N-terminus, the 314-residue chain is GDP-L-fucose synthase (314 aa).

NADP(+)-binding positions include 15–21 (GHKGMVG) and 109–112 (LGSS). Tyr140 (proton donor/acceptor) is an active-site residue. Residues Lys144, 167-170 (PTNL), and His183 each bind NADP(+). Substrate is bound by residues Lys191, Trp206, Arg213, and Asp273.

Belongs to the NAD(P)-dependent epimerase/dehydratase family. Fucose synthase subfamily.

It carries out the reaction GDP-beta-L-fucose + NADP(+) = GDP-4-dehydro-alpha-D-rhamnose + NADPH + H(+). Its pathway is nucleotide-sugar biosynthesis; GDP-L-fucose biosynthesis via de novo pathway; GDP-L-fucose from GDP-alpha-D-mannose: step 2/2. In terms of biological role, catalyzes the two-step NADP-dependent conversion of GDP-4-dehydro-6-deoxy-D-mannose to GDP-fucose, involving an epimerase and a reductase reaction. The protein is GDP-L-fucose synthase of Sinorhizobium fredii (strain NBRC 101917 / NGR234).